The chain runs to 708 residues: Ribosomal RNA large subunit methyltransferase K/L (708 aa).

Residues 43 to 154 (QIYRCCLWSR…KENALLGIDM (112 aa)) form the THUMP domain.

Belongs to the methyltransferase superfamily. RlmKL family.

The protein resides in the cytoplasm. The catalysed reaction is guanosine(2445) in 23S rRNA + S-adenosyl-L-methionine = N(2)-methylguanosine(2445) in 23S rRNA + S-adenosyl-L-homocysteine + H(+). It carries out the reaction guanosine(2069) in 23S rRNA + S-adenosyl-L-methionine = N(2)-methylguanosine(2069) in 23S rRNA + S-adenosyl-L-homocysteine + H(+). Its function is as follows. Specifically methylates the guanine in position 2445 (m2G2445) and the guanine in position 2069 (m7G2069) of 23S rRNA. The sequence is that of Ribosomal RNA large subunit methyltransferase K/L from Vibrio cholerae serotype O1 (strain ATCC 39541 / Classical Ogawa 395 / O395).